A 121-amino-acid polypeptide reads, in one-letter code: Type II secretion system protein I (121 aa).

A propeptide spans M1–G6 (leader sequence). M7 carries the N-methylmethionine modification. The chain crosses the membrane as a helical span at residues M7–M27.

Belongs to the GSP I family. In terms of assembly, type II secretion is composed of four main components: the outer membrane complex, the inner membrane complex, the cytoplasmic secretion ATPase and the periplasm-spanning pseudopilus. Interacts with core component PulG. In terms of processing, cleaved by prepilin peptidase. Methylated by prepilin peptidase at the amino group of the N-terminal methionine once the leader sequence is cleaved by prepilin peptidase.

The protein resides in the cell inner membrane. In terms of biological role, component of the type II secretion system required for the energy-dependent secretion of extracellular factors such as proteases and toxins from the periplasm. Part of the pseudopilus tip complex that is critical for the recognition and binding of secretion substrates. This is Type II secretion system protein I (pulI) from Klebsiella pneumoniae.